The chain runs to 158 residues: 6,7-dimethyl-8-ribityllumazine synthase (158 aa).

5-amino-6-(D-ribitylamino)uracil contacts are provided by residues Phe-24, 58-60, and 82-84; these read AFE and AVI. 87–88 contributes to the (2S)-2-hydroxy-3-oxobutyl phosphate binding site; the sequence is GT. His-90 functions as the Proton donor in the catalytic mechanism. Position 115 (Phe-115) interacts with 5-amino-6-(D-ribitylamino)uracil. Position 129 (Arg-129) interacts with (2S)-2-hydroxy-3-oxobutyl phosphate.

This sequence belongs to the DMRL synthase family. Forms an icosahedral capsid composed of 60 subunits, arranged as a dodecamer of pentamers.

The enzyme catalyses (2S)-2-hydroxy-3-oxobutyl phosphate + 5-amino-6-(D-ribitylamino)uracil = 6,7-dimethyl-8-(1-D-ribityl)lumazine + phosphate + 2 H2O + H(+). It functions in the pathway cofactor biosynthesis; riboflavin biosynthesis; riboflavin from 2-hydroxy-3-oxobutyl phosphate and 5-amino-6-(D-ribitylamino)uracil: step 1/2. Catalyzes the formation of 6,7-dimethyl-8-ribityllumazine by condensation of 5-amino-6-(D-ribitylamino)uracil with 3,4-dihydroxy-2-butanone 4-phosphate. This is the penultimate step in the biosynthesis of riboflavin. The protein is 6,7-dimethyl-8-ribityllumazine synthase of Stutzerimonas stutzeri (strain A1501) (Pseudomonas stutzeri).